The chain runs to 419 residues: Alpha-galactosidase A (419 aa).

The signal sequence occupies residues 1–31; that stretch reads MKLLSRDTRLVCELALCPLALVFWSILGVRA. Intrachain disulfides connect cysteine 52–cysteine 94 and cysteine 56–cysteine 63. N-linked (GlcNAc...) asparagine glycosylation is present at asparagine 139. A disulfide bridge connects residues cysteine 142 and cysteine 172. Catalysis depends on aspartate 170, which acts as the Nucleophile. Tyrosine 186 carries the post-translational modification Phosphotyrosine. N-linked (GlcNAc...) asparagine glycosylation occurs at asparagine 192. A disulfide bridge links cysteine 202 with cysteine 223. Residue 203–207 participates in substrate binding; the sequence is EWPLY. Asparagine 215 carries an N-linked (GlcNAc...) asparagine glycan. The active-site Proton donor is aspartate 231. A disulfide bridge connects residues cysteine 378 and cysteine 382.

This sequence belongs to the glycosyl hydrolase 27 family. As to quaternary structure, homodimer.

It localises to the lysosome. The enzyme catalyses Hydrolysis of terminal, non-reducing alpha-D-galactose residues in alpha-D-galactosides, including galactose oligosaccharides, galactomannans and galactolipids.. It carries out the reaction a globoside Gb3Cer (d18:1(4E)) + H2O = a beta-D-Gal-(1-&gt;4)-beta-D-Glc-(1&lt;-&gt;1)-Cer(d18:1(4E)) + D-galactose. The catalysed reaction is a globoside Gb3Cer + H2O = a beta-D-galactosyl-(1-&gt;4)-beta-D-glucosyl-(1&lt;-&gt;1)-ceramide + D-galactose. Its activity is regulated as follows. Galactosylgalactosylglucosylceramidase activity is stimulated by saposin B and ammonium chloride. In terms of biological role, catalyzes the hydrolysis of glycosphingolipids and participates in their degradation in the lysosome. In Mus musculus (Mouse), this protein is Alpha-galactosidase A.